The following is a 319-amino-acid chain: Acetyl-coenzyme A carboxylase carboxyl transferase subunit alpha (319 aa).

The region spanning 31-292 is the CoA carboxyltransferase C-terminal domain; it reads EIDSAIRSLR…KTYLSRQLSE (262 aa).

The protein belongs to the AccA family. In terms of assembly, acetyl-CoA carboxylase is a heterohexamer composed of biotin carboxyl carrier protein (AccB), biotin carboxylase (AccC) and two subunits each of ACCase subunit alpha (AccA) and ACCase subunit beta (AccD).

Its subcellular location is the cytoplasm. It catalyses the reaction N(6)-carboxybiotinyl-L-lysyl-[protein] + acetyl-CoA = N(6)-biotinyl-L-lysyl-[protein] + malonyl-CoA. It functions in the pathway lipid metabolism; malonyl-CoA biosynthesis; malonyl-CoA from acetyl-CoA: step 1/1. In terms of biological role, component of the acetyl coenzyme A carboxylase (ACC) complex. First, biotin carboxylase catalyzes the carboxylation of biotin on its carrier protein (BCCP) and then the CO(2) group is transferred by the carboxyltransferase to acetyl-CoA to form malonyl-CoA. The sequence is that of Acetyl-coenzyme A carboxylase carboxyl transferase subunit alpha from Rhodopirellula baltica (strain DSM 10527 / NCIMB 13988 / SH1).